Consider the following 200-residue polypeptide: MSPSWLVIGLGNPGPRYDGTRHNVGADVIAELCRRAGEKLSPARGQRAELVRTRLSSAGLGVPAVDAQTVILMRSRTYMNESGIAVSKVASFAGITPDHLIVVHDEIDLDPGRLRLKKGGGDNGHNGLKSIRAHLRTGDFIRVRLGVGRPPGHQDPADWVLARVPARQRAEMGVQVALAADAVESIIIQGLAAAQNRFNS.

TRNA is bound at residue Y17. The active-site Proton acceptor is the H22. TRNA is bound by residues Y78, N80, and N126.

Belongs to the PTH family. In terms of assembly, monomer.

The protein localises to the cytoplasm. It carries out the reaction an N-acyl-L-alpha-aminoacyl-tRNA + H2O = an N-acyl-L-amino acid + a tRNA + H(+). Hydrolyzes ribosome-free peptidyl-tRNAs (with 1 or more amino acids incorporated), which drop off the ribosome during protein synthesis, or as a result of ribosome stalling. Its function is as follows. Catalyzes the release of premature peptidyl moieties from peptidyl-tRNA molecules trapped in stalled 50S ribosomal subunits, and thus maintains levels of free tRNAs and 50S ribosomes. This is Peptidyl-tRNA hydrolase from Cutibacterium acnes (strain DSM 16379 / KPA171202) (Propionibacterium acnes).